A 433-amino-acid polypeptide reads, in one-letter code: Pyrimidine-nucleoside phosphorylase (433 aa).

Phosphate is bound at residue 81 to 83 (KHS). Residues glycine 88 and threonine 90 each coordinate K(+). Phosphate-binding positions include threonine 92, 108-110 (KMS), and threonine 120. Substrate is bound by residues arginine 168 and lysine 187. 3 residues coordinate K(+): leucine 243, alanine 246, and glutamate 255.

This sequence belongs to the thymidine/pyrimidine-nucleoside phosphorylase family. In terms of assembly, homodimer. Requires K(+) as cofactor.

The enzyme catalyses uridine + phosphate = alpha-D-ribose 1-phosphate + uracil. It catalyses the reaction thymidine + phosphate = 2-deoxy-alpha-D-ribose 1-phosphate + thymine. The catalysed reaction is 2'-deoxyuridine + phosphate = 2-deoxy-alpha-D-ribose 1-phosphate + uracil. Catalyzes phosphorolysis of the pyrimidine nucleosides uridine, thymidine and 2'-deoxyuridine with the formation of the corresponding pyrimidine base and ribose-1-phosphate. This chain is Pyrimidine-nucleoside phosphorylase (pdp), found in Staphylococcus aureus (strain NCTC 8325 / PS 47).